The sequence spans 180 residues: Large ribosomal subunit protein uL5 (180 aa).

This sequence belongs to the universal ribosomal protein uL5 family. In terms of assembly, part of the 50S ribosomal subunit; part of the 5S rRNA/L5/L18/L25 subcomplex. Contacts the 5S rRNA and the P site tRNA. Forms a bridge to the 30S subunit in the 70S ribosome.

Its function is as follows. This is one of the proteins that bind and probably mediate the attachment of the 5S RNA into the large ribosomal subunit, where it forms part of the central protuberance. In the 70S ribosome it contacts protein S13 of the 30S subunit (bridge B1b), connecting the 2 subunits; this bridge is implicated in subunit movement. Contacts the P site tRNA; the 5S rRNA and some of its associated proteins might help stabilize positioning of ribosome-bound tRNAs. This chain is Large ribosomal subunit protein uL5, found in Streptococcus agalactiae serotype Ia (strain ATCC 27591 / A909 / CDC SS700).